Here is a 523-residue protein sequence, read N- to C-terminus: Amino acid transporter protein 6 (523 aa).

Residues 1–19 lie on the Cytoplasmic side of the membrane; it reads MLNVFGVSASMPDDSRSQK. Residues 20–40 traverse the membrane as a helical segment; the sequence is MGLLGAISYIVGNIVGSGIFI. Residues 41–51 lie on the Extracellular side of the membrane; sequence TPTSIIENVNS. Residues 52-72 traverse the membrane as a helical segment; that stretch reads VGLSLAIWILAAFISMLGSFC. Topologically, residues 73–86 are cytoplasmic; sequence YVELGTSIRLSGGD. Residues 87-107 form a helical membrane-spanning segment; the sequence is FAYLCFMKWYPVAFAFMCIGC. The Extracellular portion of the chain corresponds to 108-145; the sequence is TINYPATLAVQAQTFAEYVFRGAGVELDETSEFWAKKL. The chain crosses the membrane as a helical span at residues 146-166; the sequence is LGFSLIILLMFMNFFSLKTFV. The Cytoplasmic portion of the chain corresponds to 167-173; it reads QRFSILA. Residues 174–194 form a helical membrane-spanning segment; the sequence is SLAKIAATLLIIITGFYYLIF. Residues 195–214 are Extracellular-facing; it reads KHWKQNLEEPFKGSNWNPGP. Residues 215–235 form a helical membrane-spanning segment; sequence FVNALFAGLFSYDGWDILNFG. Residues 236–249 lie on the Cytoplasmic side of the membrane; the sequence is AEEIENPKRTMPLS. A helical transmembrane segment spans residues 250–270; sequence IIIGMTCIGVIYVAVNVAYSI. Residues 271–290 lie on the Extracellular side of the membrane; that stretch reads VLSPTEMIASNAVAIDFANK. A glycan (N-linked (GlcNAc...) asparagine) is linked at Asn289. Residues 291–311 form a helical membrane-spanning segment; it reads TLGAAAFVVPVMVAILLIGSL. Residues 312 to 348 lie on the Cytoplasmic side of the membrane; it reads NSTMFSASRYLQAVSRQGHIPSAISGIAPNCDSPRVA. Residues 349–369 traverse the membrane as a helical segment; the sequence is LLVHILIAIAVSFLGDPDKLI. At 370–404 the chain is on the extracellular side; that stretch reads NYVAFAQWSQRAFTMSALLYLRIRGRPRHPDRIQL. The chain crosses the membrane as a helical span at residues 405 to 425; sequence PIIMPILFFLVCTSMVVISII. The Cytoplasmic segment spans residues 426-429; it reads DDFK. Residues 430–450 form a helical membrane-spanning segment; that stretch reads SSAVGLGILLGGLIIFIIFVW. Residues 451 to 523 are Extracellular-facing; the sequence is DRALPSSHTF…GNGQFKCTRM (73 aa). An N-linked (GlcNAc...) asparagine glycan is attached at Asn462. The PDZ-binding motif signature appears at 521–523; the sequence is TRM.

This sequence belongs to the amino acid-polyamine-organocation (APC) superfamily. In terms of assembly, interacts (via PDZ-binding motif) with nfrl-1 (via PDZ 2 domain); the interaction with nrfl-1 is required to sequester aat-6 to the apical cell membrane of intestinal cells. Expressed at the apical cell membrane of intestinal cells.

The protein localises to the apical cell membrane. Its function is as follows. Amino acid transporter that mediates the uptake of the L-enantiomers of various amino acids, including L-glutamate. May play a role in promoting fertility. This chain is Amino acid transporter protein 6, found in Caenorhabditis elegans.